The following is a 243-amino-acid chain: Pyridoxine 5'-phosphate synthase (243 aa).

Residue asparagine 9 participates in 3-amino-2-oxopropyl phosphate binding. A 1-deoxy-D-xylulose 5-phosphate-binding site is contributed by 11–12 (DH). Residue arginine 20 participates in 3-amino-2-oxopropyl phosphate binding. Histidine 45 (proton acceptor) is an active-site residue. Positions 47 and 52 each coordinate 1-deoxy-D-xylulose 5-phosphate. Glutamate 72 (proton acceptor) is an active-site residue. Threonine 102 contributes to the 1-deoxy-D-xylulose 5-phosphate binding site. Catalysis depends on histidine 193, which acts as the Proton donor. 3-amino-2-oxopropyl phosphate is bound by residues glycine 194 and 215-216 (GH).

It belongs to the PNP synthase family. As to quaternary structure, homooctamer; tetramer of dimers.

It is found in the cytoplasm. The catalysed reaction is 3-amino-2-oxopropyl phosphate + 1-deoxy-D-xylulose 5-phosphate = pyridoxine 5'-phosphate + phosphate + 2 H2O + H(+). It participates in cofactor biosynthesis; pyridoxine 5'-phosphate biosynthesis; pyridoxine 5'-phosphate from D-erythrose 4-phosphate: step 5/5. Functionally, catalyzes the complicated ring closure reaction between the two acyclic compounds 1-deoxy-D-xylulose-5-phosphate (DXP) and 3-amino-2-oxopropyl phosphate (1-amino-acetone-3-phosphate or AAP) to form pyridoxine 5'-phosphate (PNP) and inorganic phosphate. This Escherichia coli O157:H7 protein is Pyridoxine 5'-phosphate synthase.